Consider the following 360-residue polypeptide: UPF0324 membrane protein plu2856 (360 aa).

9 helical membrane-spanning segments follow: residues 20–42 (LIPG…NIPW), 47–69 (GLGT…YPLL), 104–126 (VGIT…AIWL), 136–155 (QTVI…AIMA), 167–189 (VAVA…PWFY), 239–256 (MIRV…SRYI), 277–299 (WFAV…AAIV), 304–326 (NIDT…VSAI), and 333–355 (PILL…NLGI).

It belongs to the UPF0324 family.

It localises to the cell membrane. In Photorhabdus laumondii subsp. laumondii (strain DSM 15139 / CIP 105565 / TT01) (Photorhabdus luminescens subsp. laumondii), this protein is UPF0324 membrane protein plu2856.